The sequence spans 202 residues: ATP-dependent Clp protease proteolytic subunit (202 aa).

The Nucleophile role is filled by Ser101. Residue His126 is part of the active site.

This sequence belongs to the peptidase S14 family. Component of the chloroplastic Clp protease core complex.

It localises to the plastid. The protein localises to the chloroplast stroma. The catalysed reaction is Hydrolysis of proteins to small peptides in the presence of ATP and magnesium. alpha-casein is the usual test substrate. In the absence of ATP, only oligopeptides shorter than five residues are hydrolyzed (such as succinyl-Leu-Tyr-|-NHMec, and Leu-Tyr-Leu-|-Tyr-Trp, in which cleavage of the -Tyr-|-Leu- and -Tyr-|-Trp bonds also occurs).. In terms of biological role, cleaves peptides in various proteins in a process that requires ATP hydrolysis. Has a chymotrypsin-like activity. Plays a major role in the degradation of misfolded proteins. The sequence is that of ATP-dependent Clp protease proteolytic subunit from Nuphar advena (Common spatterdock).